Reading from the N-terminus, the 304-residue chain is Retrotransposon Gag-like protein 4 (304 aa).

The segment at Gln-276 to Ala-293 adopts a CCHC-type zinc-finger fold.

In adults, expressed in brain, eye, kidney, ovary and testis. Weakly expressed in thymus, heart and muscle.

In terms of biological role, involved in cognitive function in the brain, possibly via the noradrenergic system. This chain is Retrotransposon Gag-like protein 4, found in Mus musculus (Mouse).